Consider the following 202-residue polypeptide: tRNA (pseudouridine(54)-N(1))-methyltransferase (202 aa).

The S-adenosyl-L-methionine site is built by leucine 130, glycine 152, and cysteine 185.

The protein belongs to the methyltransferase superfamily. TrmY family. As to quaternary structure, homodimer.

It localises to the cytoplasm. The catalysed reaction is pseudouridine(54) in tRNA + S-adenosyl-L-methionine = N(1)-methylpseudouridine(54) in tRNA + S-adenosyl-L-homocysteine + H(+). In terms of biological role, specifically catalyzes the N1-methylation of pseudouridine at position 54 (Psi54) in tRNAs. The polypeptide is tRNA (pseudouridine(54)-N(1))-methyltransferase (Methanococcoides burtonii (strain DSM 6242 / NBRC 107633 / OCM 468 / ACE-M)).